The following is a 343-amino-acid chain: Uroporphyrinogen decarboxylase (343 aa).

Substrate contacts are provided by residues 23–27, Asp-73, Tyr-149, Thr-204, and His-320; that span reads RQAGR.

The protein belongs to the uroporphyrinogen decarboxylase family. As to quaternary structure, homodimer.

It is found in the cytoplasm. The catalysed reaction is uroporphyrinogen III + 4 H(+) = coproporphyrinogen III + 4 CO2. It participates in porphyrin-containing compound metabolism; protoporphyrin-IX biosynthesis; coproporphyrinogen-III from 5-aminolevulinate: step 4/4. Its function is as follows. Catalyzes the decarboxylation of four acetate groups of uroporphyrinogen-III to yield coproporphyrinogen-III. The sequence is that of Uroporphyrinogen decarboxylase from Bradyrhizobium sp. (strain BTAi1 / ATCC BAA-1182).